The primary structure comprises 265 residues: Transcription factor Spi-B-like (265 aa).

The segment at 1-31 (MLTLEASQLDGPHPSYMFSDSSFYDLDSCKP) is TAD1 (Acidic). Residues 42–63 (AEPPTDPCAGWLELAEPGYEPF) are TAD2. A disordered region spans residues 127–160 (TPLSEDDDFPTDAPALEVSDSDSDENLSPGGSLD). The ETS DNA-binding region spans 169–252 (LRLYQFLLGL…VKKKLTYQFG (84 aa)).

This sequence belongs to the ETS family.

It is found in the nucleus. In terms of biological role, may act as a sequence specific transcriptional activator. This is Transcription factor Spi-B-like from Paleosuchus palpebrosus (Cuvier's smooth-fronted caiman).